A 257-amino-acid chain; its full sequence is MTQAQKLSAQEIIQFIGNAEKKTQVKVTLSGMPSFKSAGFLAENGRPNFKALANKGIQVLGDFHTHYSLKIIIGDWQAVRPLLEGLTENKDYTIEFEGRNSAVPLLDTRAINARIEPGAIIRDQVMIGDNAVIMMGAIINIGAEIGEGTMIDMGAVLGGRATVGKNSHIGAGAVLAGVIEPASAEPVRVGDNVLVGANAVVIEGVQVGSGSVVAAGAIVTQDVPENVVVAGVPARTIKEIDEKTAQKTALEDALRNL.

It belongs to the transferase hexapeptide repeat family. DapH subfamily.

It catalyses the reaction (S)-2,3,4,5-tetrahydrodipicolinate + acetyl-CoA + H2O = L-2-acetamido-6-oxoheptanedioate + CoA. It participates in amino-acid biosynthesis; L-lysine biosynthesis via DAP pathway; LL-2,6-diaminopimelate from (S)-tetrahydrodipicolinate (acetylase route): step 1/3. In terms of biological role, catalyzes the transfer of an acetyl group from acetyl-CoA to tetrahydrodipicolinate. The protein is 2,3,4,5-tetrahydropyridine-2,6-dicarboxylate N-acetyltransferase of Lactococcus lactis subsp. cremoris (strain SK11).